The sequence spans 498 residues: Nucleoprotein (498 aa).

Residues 1–18 (MASQGTKRSYEQMETDGE) carry the Unconventional nuclear localization signal motif. A disordered region spans residues 1–21 (MASQGTKRSYEQMETDGERQN). The segment covering 8-21 (RSYEQMETDGERQN) has biased composition (basic and acidic residues). The short motif at 198–216 (KRGINDRNFWRGENGRKTR) is the Bipartite nuclear localization signal element.

The protein belongs to the influenza viruses nucleoprotein family. In terms of assembly, homomultimerizes to form the nucleocapsid. May bind host exportin-1/XPO1. Binds to viral genomic RNA. Protein-RNA contacts are mediated by a combination of electrostatic interactions between positively charged residues and the phosphate backbone and planar interactions between aromatic side chains and bases. Late in virus-infected cells, may be cleaved from a 56-kDa protein to a 53-kDa protein by a cellular caspase. This cleavage might be a marker for the onset of apoptosis in infected cells or have a specific function in virus host interaction.

The protein resides in the virion. It localises to the host nucleus. Its function is as follows. Encapsidates the negative strand viral RNA, protecting it from nucleases. The encapsidated genomic RNA is termed the ribonucleoprotein (RNP) and serves as template for transcription and replication. The RNP needs to be localized in the host nucleus to start an infectious cycle, but is too large to diffuse through the nuclear pore complex. NP comprises at least 2 nuclear localization signals that are responsible for the active RNP import into the nucleus through cellular importin alpha/beta pathway. Later in the infection, nclear export of RNPs are mediated through viral proteins NEP interacting with M1 which binds nucleoproteins. It is possible that nucleoprotein binds directly host exportin-1/XPO1 and plays an active role in RNPs nuclear export. M1 interaction with RNP seems to hide nucleoprotein's nuclear localization signals. Soon after a virion infects a new cell, M1 dissociates from the RNP under acidification of the virion driven by M2 protein. Dissociation of M1 from RNP unmasks nucleoprotein's nuclear localization signals, targeting the RNP to the nucleus. In Aves (whales), this protein is Nucleoprotein.